A 156-amino-acid chain; its full sequence is Small ribosomal subunit protein uS7 (156 aa).

The protein belongs to the universal ribosomal protein uS7 family. Part of the 30S ribosomal subunit. Contacts proteins S9 and S11.

Functionally, one of the primary rRNA binding proteins, it binds directly to 16S rRNA where it nucleates assembly of the head domain of the 30S subunit. Is located at the subunit interface close to the decoding center, probably blocks exit of the E-site tRNA. The chain is Small ribosomal subunit protein uS7 from Methylobacterium nodulans (strain LMG 21967 / CNCM I-2342 / ORS 2060).